We begin with the raw amino-acid sequence, 270 residues long: MSIYAVGDLQGCLTPLKRLLEQVRFDPAADQLWLVGDLVNRGPESLEALRFVRDLGDAAITVLGNHDLHLLAIHQGVHKVRRKDTVQPILDAPDRAELMDWLRHRPLLHHDPRIQWTLLHAGLPPQWDLAMARACASEVETVLRGPDHPTLLERMYGDEPDQWSESLQGWARLRFITNCFTRLRYCTADGSVDMAYKGAPGGQLPHLMPWFAVPGRRSVGTRIVFGHWSTLGLYQGDDVLCLDTGCVWGQRMTLARLDSSALETMHTRCE.

This sequence belongs to the Ap4A hydrolase family.

The enzyme catalyses P(1),P(4)-bis(5'-adenosyl) tetraphosphate + H2O = 2 ADP + 2 H(+). In terms of biological role, hydrolyzes diadenosine 5',5'''-P1,P4-tetraphosphate to yield ADP. In Thioalkalivibrio sulfidiphilus (strain HL-EbGR7), this protein is Bis(5'-nucleosyl)-tetraphosphatase, symmetrical.